We begin with the raw amino-acid sequence, 397 residues long: Succinyl-diaminopimelate desuccinylase (397 aa).

His-73 lines the Zn(2+) pocket. Residue Asp-75 is part of the active site. Asp-106 is a binding site for Zn(2+). Glu-140 functions as the Proton acceptor in the catalytic mechanism. Zn(2+) is bound by residues Glu-141, Glu-169, and His-366.

Belongs to the peptidase M20A family. DapE subfamily. In terms of assembly, homodimer. Requires Zn(2+) as cofactor. Co(2+) is required as a cofactor.

It catalyses the reaction N-succinyl-(2S,6S)-2,6-diaminopimelate + H2O = (2S,6S)-2,6-diaminopimelate + succinate. Its pathway is amino-acid biosynthesis; L-lysine biosynthesis via DAP pathway; LL-2,6-diaminopimelate from (S)-tetrahydrodipicolinate (succinylase route): step 3/3. Its function is as follows. Catalyzes the hydrolysis of N-succinyl-L,L-diaminopimelic acid (SDAP), forming succinate and LL-2,6-diaminopimelate (DAP), an intermediate involved in the bacterial biosynthesis of lysine and meso-diaminopimelic acid, an essential component of bacterial cell walls. This Rhizobium rhizogenes (strain K84 / ATCC BAA-868) (Agrobacterium radiobacter) protein is Succinyl-diaminopimelate desuccinylase.